We begin with the raw amino-acid sequence, 58 residues long: Large ribosomal subunit protein bL32 (58 aa).

It belongs to the bacterial ribosomal protein bL32 family.

The polypeptide is Large ribosomal subunit protein bL32 (Sulfurihydrogenibium sp. (strain YO3AOP1)).